A 287-amino-acid chain; its full sequence is PsbP domain-containing protein 1, chloroplastic (287 aa).

This sequence belongs to the PsbP family. Partially associated with photosystem I (PSI) complex, but is not a subunit of the complex. Interacts with PsaA and PsaB, but not with PasF.

It localises to the plastid. The protein resides in the chloroplast thylakoid lumen. Photosystem I assembly factor that assists the proper folding and integration of PsaB and PsaA into the thylakoid membrane. The protein is PsbP domain-containing protein 1, chloroplastic (PPD1) of Arabidopsis thaliana (Mouse-ear cress).